Reading from the N-terminus, the 430-residue chain is Enolase (430 aa).

(2R)-2-phosphoglycerate is bound at residue Q165. Catalysis depends on E207, which acts as the Proton donor. D244, E287, and D314 together coordinate Mg(2+). 4 residues coordinate (2R)-2-phosphoglycerate: K339, R368, S369, and K390. K339 serves as the catalytic Proton acceptor.

Belongs to the enolase family. In terms of assembly, component of the RNA degradosome, a multiprotein complex involved in RNA processing and mRNA degradation. The cofactor is Mg(2+).

The protein localises to the cytoplasm. Its subcellular location is the secreted. The protein resides in the cell surface. The enzyme catalyses (2R)-2-phosphoglycerate = phosphoenolpyruvate + H2O. Its pathway is carbohydrate degradation; glycolysis; pyruvate from D-glyceraldehyde 3-phosphate: step 4/5. Functionally, catalyzes the reversible conversion of 2-phosphoglycerate (2-PG) into phosphoenolpyruvate (PEP). It is essential for the degradation of carbohydrates via glycolysis. In Xylella fastidiosa (strain 9a5c), this protein is Enolase.